Consider the following 758-residue polypeptide: 5-methyltetrahydropteroyltriglutamate--homocysteine methyltransferase (758 aa).

Residues 17–20 and Lys117 each bind 5-methyltetrahydropteroyltri-L-glutamate; that span reads RELK. L-homocysteine-binding positions include 434–436 and Glu487; that span reads IGS. L-methionine is bound by residues 434 to 436 and Glu487; that span reads IGS. 5-methyltetrahydropteroyltri-L-glutamate contacts are provided by residues 518 to 519 and Trp564; that span reads RC. Asp602 contacts L-homocysteine. Position 602 (Asp602) interacts with L-methionine. Position 608 (Glu608) interacts with 5-methyltetrahydropteroyltri-L-glutamate. Residues His644, Cys646, and Glu668 each contribute to the Zn(2+) site. His697 acts as the Proton donor in catalysis. Position 729 (Cys729) interacts with Zn(2+).

Belongs to the vitamin-B12 independent methionine synthase family. The cofactor is Zn(2+).

The catalysed reaction is 5-methyltetrahydropteroyltri-L-glutamate + L-homocysteine = tetrahydropteroyltri-L-glutamate + L-methionine. The protein operates within amino-acid biosynthesis; L-methionine biosynthesis via de novo pathway; L-methionine from L-homocysteine (MetE route): step 1/1. Its function is as follows. Catalyzes the transfer of a methyl group from 5-methyltetrahydrofolate to homocysteine resulting in methionine formation. The protein is 5-methyltetrahydropteroyltriglutamate--homocysteine methyltransferase of Yersinia pestis bv. Antiqua (strain Antiqua).